Here is a 265-residue protein sequence, read N- to C-terminus: MESQLFNAPAKKAFGQHFLVDRYYIDRIIHAITPQPNDHIVEIGPGQGAITLPLLKCCGSLTAIELDRDLIAPLTAAATPLGKLDIIHRDVLTVDLSILAKPGNKKLRLVGNLPYNISSPILFHVLQQAAIIADMHFMLQKEVVDRMAAPPGSKVYGRLSVMLQAWCEVTTMFVVPPDAFQPPPKVNSAITRLVPRDPTTIRIADTKRFSDIVRAAFGQRRKTLRNSLADICTPAHFEHAGIRTNARAEQLEVTEFIALANAKDT.

The S-adenosyl-L-methionine site is built by His17, Leu19, Gly44, Glu65, Asp90, and Asn112.

This sequence belongs to the class I-like SAM-binding methyltransferase superfamily. rRNA adenine N(6)-methyltransferase family. RsmA subfamily.

The protein localises to the cytoplasm. The enzyme catalyses adenosine(1518)/adenosine(1519) in 16S rRNA + 4 S-adenosyl-L-methionine = N(6)-dimethyladenosine(1518)/N(6)-dimethyladenosine(1519) in 16S rRNA + 4 S-adenosyl-L-homocysteine + 4 H(+). Specifically dimethylates two adjacent adenosines (A1518 and A1519) in the loop of a conserved hairpin near the 3'-end of 16S rRNA in the 30S particle. May play a critical role in biogenesis of 30S subunits. The protein is Ribosomal RNA small subunit methyltransferase A of Xylella fastidiosa (strain 9a5c).